We begin with the raw amino-acid sequence, 106 residues long: Putative double-stranded DNA mimic protein PM0536 (106 aa).

This sequence belongs to the putative dsDNA mimic protein family.

Its function is as follows. May act as a double-stranded DNA (dsDNA) mimic. Probably regulates the activity of a dsDNA-binding protein. The chain is Putative double-stranded DNA mimic protein PM0536 from Pasteurella multocida (strain Pm70).